A 153-amino-acid polypeptide reads, in one-letter code: Deoxyuridine 5'-triphosphate nucleotidohydrolase (153 aa).

Residues 65–67 (RSG), Asn-78, and 82–84 (TID) each bind substrate. Residues 132 to 153 (MTQRGEGGFGHTGISAVHPRTH) are disordered.

The protein belongs to the dUTPase family. The cofactor is Mg(2+).

The enzyme catalyses dUTP + H2O = dUMP + diphosphate + H(+). It participates in pyrimidine metabolism; dUMP biosynthesis; dUMP from dCTP (dUTP route): step 2/2. Its function is as follows. This enzyme is involved in nucleotide metabolism: it produces dUMP, the immediate precursor of thymidine nucleotides and it decreases the intracellular concentration of dUTP so that uracil cannot be incorporated into DNA. This is Deoxyuridine 5'-triphosphate nucleotidohydrolase from Chlorobium limicola (strain DSM 245 / NBRC 103803 / 6330).